The chain runs to 300 residues: N-acetylmuramic acid 6-phosphate etherase 2 (300 aa).

Residues 57–220 (ITAAFANGGR…TTGAMIRSGK (164 aa)) enclose the SIS domain. The Proton donor role is filled by glutamate 85. Residue glutamate 116 is part of the active site.

It belongs to the GCKR-like family. MurNAc-6-P etherase subfamily. In terms of assembly, homodimer.

It catalyses the reaction N-acetyl-D-muramate 6-phosphate + H2O = N-acetyl-D-glucosamine 6-phosphate + (R)-lactate. Its pathway is amino-sugar metabolism; 1,6-anhydro-N-acetylmuramate degradation. It participates in amino-sugar metabolism; N-acetylmuramate degradation. The protein operates within cell wall biogenesis; peptidoglycan recycling. Functionally, specifically catalyzes the cleavage of the D-lactyl ether substituent of MurNAc 6-phosphate, producing GlcNAc 6-phosphate and D-lactate. Together with AnmK, is also required for the utilization of anhydro-N-acetylmuramic acid (anhMurNAc) either imported from the medium or derived from its own cell wall murein, and thus plays a role in cell wall recycling. This Vibrio parahaemolyticus serotype O3:K6 (strain RIMD 2210633) protein is N-acetylmuramic acid 6-phosphate etherase 2.